Here is a 490-residue protein sequence, read N- to C-terminus: Selenium-binding protein 1 (490 aa).

Alanine 2 carries the post-translational modification N-acetylalanine. Residues cysteine 21 and cysteine 22 each coordinate selenite.

It belongs to the selenium-binding protein family. In terms of assembly, interacts with GRXS14 and GRXS16. Interacts with DALL3. In terms of tissue distribution, expressed in seedlings, roots, leaves, stems and flowers.

Its function is as follows. Binds cadmium and mediates lower sensitivity to stress requiring glutathione (GSH) for tolerance (e.g. cadmium, selenate, and hydrogen peroxide excess). Probably helps to detoxify cadmium potentially through direct binding. Binds selenium, cadmium, zinc and nickel in vitro. The chain is Selenium-binding protein 1 from Arabidopsis thaliana (Mouse-ear cress).